The following is a 612-amino-acid chain: tRNA uridine 5-carboxymethylaminomethyl modification enzyme MnmG (612 aa).

Residue 9–14 (GAGHAG) participates in FAD binding. 270–284 (GPLYCPSIEDKVFKF) is a binding site for NAD(+).

This sequence belongs to the MnmG family. In terms of assembly, homodimer. Heterotetramer of two MnmE and two MnmG subunits. FAD is required as a cofactor.

It is found in the cytoplasm. In terms of biological role, NAD-binding protein involved in the addition of a carboxymethylaminomethyl (cmnm) group at the wobble position (U34) of certain tRNAs, forming tRNA-cmnm(5)s(2)U34. The polypeptide is tRNA uridine 5-carboxymethylaminomethyl modification enzyme MnmG (Mycoplasma genitalium (strain ATCC 33530 / DSM 19775 / NCTC 10195 / G37) (Mycoplasmoides genitalium)).